The sequence spans 296 residues: Putative peptide transport system permease protein BRA1093/BS1330_II1085 (296 aa).

The next 6 helical transmembrane spans lie at 35 to 55 (IGLVLLLIVVLAAVLAPWITN), 97 to 117 (LWIGLTVAVLSAILGAIIGIA), 131 to 151 (VMDALMAFPAILLAIGISAAL), 205 to 225 (ILPNCLAPLLVTLTFVFAYAI), 229 to 249 (ATLSFLGIGTPPPHASWGSIV), and 260 to 280 (WWIMLFPGIAITISALAINLI). The 185-residue stretch at 97–281 (LWIGLTVAVL…ISALAINLIG (185 aa)) folds into the ABC transmembrane type-1 domain.

This sequence belongs to the binding-protein-dependent transport system permease family. The complex is composed of two ATP-binding proteins (BRA1094), two transmembrane proteins (BRA1092 and BRA1093) and a solute-binding protein (BRA1090).

Its subcellular location is the cell inner membrane. Functionally, probably part of an ABC transporter complex that could be involved in peptide import. Probably responsible for the translocation of the substrate across the membrane. The chain is Putative peptide transport system permease protein BRA1093/BS1330_II1085 from Brucella suis biovar 1 (strain 1330).